A 476-amino-acid chain; its full sequence is Cytosolic iron-sulfur assembly component 3 (476 aa).

Ala2 carries the post-translational modification N-acetylalanine. Positions 24, 71, 74, 77, 190, 246, 395, and 399 each coordinate [4Fe-4S] cluster.

It belongs to the NARF family. In terms of assembly, external component of the CIA complex. In the CIA complex, interacts directly with CIAO1 and MMS19.

In terms of biological role, component of the cytosolic iron-sulfur protein assembly (CIA) complex, a multiprotein complex that mediates the incorporation of iron-sulfur cluster into extramitochondrial Fe/S proteins. Seems to negatively regulate the level of HIF1A expression, although this effect could be indirect. This is Cytosolic iron-sulfur assembly component 3 from Rattus norvegicus (Rat).